Reading from the N-terminus, the 298-residue chain is Thymidylate synthase (298 aa).

Residues Arg-25 and 159–160 (RR) contribute to the dUMP site. Residue Cys-179 is the Nucleophile of the active site. DUMP contacts are provided by residues 200–203 (RSVD), Asn-211, and 241–243 (HLY). Asp-203 contributes to the (6R)-5,10-methylene-5,6,7,8-tetrahydrofolate binding site. Residue Ala-297 participates in (6R)-5,10-methylene-5,6,7,8-tetrahydrofolate binding.

The protein belongs to the thymidylate synthase family. Bacterial-type ThyA subfamily. Homodimer.

It localises to the cytoplasm. The catalysed reaction is dUMP + (6R)-5,10-methylene-5,6,7,8-tetrahydrofolate = 7,8-dihydrofolate + dTMP. It functions in the pathway pyrimidine metabolism; dTTP biosynthesis. Its function is as follows. Catalyzes the reductive methylation of 2'-deoxyuridine-5'-monophosphate (dUMP) to 2'-deoxythymidine-5'-monophosphate (dTMP) while utilizing 5,10-methylenetetrahydrofolate (mTHF) as the methyl donor and reductant in the reaction, yielding dihydrofolate (DHF) as a by-product. This enzymatic reaction provides an intracellular de novo source of dTMP, an essential precursor for DNA biosynthesis. This is Thymidylate synthase from Cereibacter sphaeroides (strain ATCC 17023 / DSM 158 / JCM 6121 / CCUG 31486 / LMG 2827 / NBRC 12203 / NCIMB 8253 / ATH 2.4.1.) (Rhodobacter sphaeroides).